The chain runs to 21 residues: Antimicrobial peptide scolopin-1 (21 aa).

As to expression, expressed by the venom gland.

Its subcellular location is the secreted. In terms of biological role, antimicrobial peptide against both Gram-positive, -negative and yeast. Also induces histamine release by mast cells and shows moderate hemolytic activities against both human and rabbit red cells. The protein is Antimicrobial peptide scolopin-1 of Scolopendra mutilans (Chinese red-headed centipede).